The following is a 134-amino-acid chain: UPF0719 transmembrane protein YshE (134 aa).

Transmembrane regions (helical) follow at residues 10-30 (VEIA…LTVF), 48-68 (AVAM…QHSI), 78-98 (IGWG…FEFL), and 114-134 (AVGF…AAGI).

This sequence belongs to the UPF0719 family.

It localises to the cell membrane. This Bacillus subtilis (strain 168) protein is UPF0719 transmembrane protein YshE (yshE).